The primary structure comprises 363 residues: Protein MAK32 (363 aa).

It to S.pombe SpAC4G8.14c.

Functionally, necessary for the structural stability of L-A double-stranded RNA-containing particles. Necessary for growth at 37 degrees Celsius as well as for maintenance of the killer plasmid. The chain is Protein MAK32 (MAK32) from Saccharomyces cerevisiae (strain ATCC 204508 / S288c) (Baker's yeast).